The chain runs to 420 residues: ATP phosphoribosyltransferase regulatory subunit (420 aa).

This sequence belongs to the class-II aminoacyl-tRNA synthetase family. HisZ subfamily. In terms of assembly, heteromultimer composed of HisG and HisZ subunits.

The protein resides in the cytoplasm. It participates in amino-acid biosynthesis; L-histidine biosynthesis; L-histidine from 5-phospho-alpha-D-ribose 1-diphosphate: step 1/9. Its function is as follows. Required for the first step of histidine biosynthesis. May allow the feedback regulation of ATP phosphoribosyltransferase activity by histidine. The chain is ATP phosphoribosyltransferase regulatory subunit from Bacillus mycoides (strain KBAB4) (Bacillus weihenstephanensis).